A 452-amino-acid chain; its full sequence is Tubulin alpha-6 chain (452 aa).

8 residues coordinate GTP: Gln11, Glu69, Ser138, Gly142, Thr143, Thr177, Asn204, and Asn226. Glu69 lines the Mg(2+) pocket. The active site involves Glu252.

Belongs to the tubulin family. As to quaternary structure, dimer of alpha and beta chains. A typical microtubule is a hollow water-filled tube with an outer diameter of 25 nm and an inner diameter of 15 nM. Alpha-beta heterodimers associate head-to-tail to form protofilaments running lengthwise along the microtubule wall with the beta-tubulin subunit facing the microtubule plus end conferring a structural polarity. Microtubules usually have 13 protofilaments but different protofilament numbers can be found in some organisms and specialized cells. It depends on Mg(2+) as a cofactor.

It localises to the cytoplasm. The protein localises to the cytoskeleton. Its subcellular location is the spindle. It carries out the reaction GTP + H2O = GDP + phosphate + H(+). In terms of biological role, tubulin is the major constituent of microtubules, a cylinder consisting of laterally associated linear protofilaments composed of alpha- and beta-tubulin heterodimers. Microtubules grow by the addition of GTP-tubulin dimers to the microtubule end, where a stabilizing cap forms. Below the cap, tubulin dimers are in GDP-bound state, owing to GTPase activity of alpha-tubulin. This is Tubulin alpha-6 chain (TUBA6) from Naegleria pringsheimi (Amoeba).